A 97-amino-acid chain; its full sequence is Ig heavy chain V region 914 (97 aa).

The 97-residue stretch at 1-97 (EVKLVESGGG…EDTAMYYCAR (97 aa)) folds into the Ig-like domain.

In Mus musculus (Mouse), this protein is Ig heavy chain V region 914.